Consider the following 269-residue polypeptide: RBPJ-interacting and tubulin-associated protein 1 (269 aa).

The Nuclear export signal signature appears at Val-5–Leu-17. Disordered stretches follow at residues Ser-37–Arg-101 and Phe-141–Lys-269. The span at Arg-62–Asn-77 shows a compositional bias: polar residues. Residues Ser-79–Thr-93 are compositionally biased toward low complexity. Residues Leu-92–Ser-108 carry the Nuclear localization signal motif. The tract at residues Trp-128 to Pro-156 is interaction with RBPJ/RBPSUH. The tract at residues Pro-156–Lys-269 is interaction with tubulin.

It belongs to the RITA family. As to quaternary structure, interacts with RBPJ/RBPSUH.

The protein resides in the cytoplasm. Its subcellular location is the nucleus. It is found in the cytoskeleton. It localises to the microtubule organizing center. The protein localises to the centrosome. In terms of biological role, tubulin-binding protein that acts as a negative regulator of Notch signaling pathway. Shuttles between the cytoplasm and the nucleus and mediates the nuclear export of RBPJ/RBPSUH, thereby preventing the interaction between RBPJ/RBPSUH and NICD product of Notch proteins (Notch intracellular domain), leading to down-regulate Notch-mediated transcription. May play a role in neurogenesis. In Ailuropoda melanoleuca (Giant panda), this protein is RBPJ-interacting and tubulin-associated protein 1 (RITA1).